Here is a 328-residue protein sequence, read N- to C-terminus: Galactinol synthase 10 (328 aa).

Lys-106 is a catalytic residue. Asp-122, Asp-124, and His-248 together coordinate Mn(2+).

It belongs to the glycosyltransferase 8 family. Galactosyltransferase subfamily. A divalent metal cation is required as a cofactor.

Its subcellular location is the cytoplasm. The enzyme catalyses myo-inositol + UDP-alpha-D-galactose = alpha-D-galactosyl-(1-&gt;3)-1D-myo-inositol + UDP + H(+). Galactinol synthase involved in the biosynthesis of raffinose family oligosaccharides (RFOs) that function as osmoprotectants. May promote plant stress tolerance. This is Galactinol synthase 10 (GOLS10) from Arabidopsis thaliana (Mouse-ear cress).